The sequence spans 102 residues: Turripeptide OL55-like (102 aa).

Post-translationally, contains 8 disulfide bonds. Expressed by the venom duct.

The protein resides in the secreted. Its function is as follows. Acts as a neurotoxin by inhibiting an ion channel. This chain is Turripeptide OL55-like, found in Lophiotoma acuta (Marbled turris).